Consider the following 61-residue polypeptide: uncharacterized protein (61 aa).

Helical transmembrane passes span 7 to 24 (FNVF…YKLF) and 29 to 48 (VSTT…IVGL).

Its subcellular location is the cell membrane. This is an uncharacterized protein from Bacillus subtilis (strain 168).